The following is a 330-amino-acid chain: Putative protein N-methyltransferase FAM86B2 (330 aa).

N-acetylmethionine is present on Met-1. Residues Trp-139, 165–167 (GSG), Trp-228, and Ala-247 each bind S-adenosyl-L-methionine.

Belongs to the class I-like SAM-binding methyltransferase superfamily. EEF2KMT family. Interacts with EEF2KMT.

The protein is Putative protein N-methyltransferase FAM86B2 (FAM86B2) of Homo sapiens (Human).